Consider the following 600-residue polypeptide: Elongation factor 4 (600 aa).

Positions 5 to 187 (SHIRNFSIVA…ALVNRLPCPE (183 aa)) constitute a tr-type G domain. GTP contacts are provided by residues 17–22 (DHGKST) and 134–137 (NKID).

The protein belongs to the TRAFAC class translation factor GTPase superfamily. Classic translation factor GTPase family. LepA subfamily.

It localises to the cell inner membrane. The enzyme catalyses GTP + H2O = GDP + phosphate + H(+). Functionally, required for accurate and efficient protein synthesis under certain stress conditions. May act as a fidelity factor of the translation reaction, by catalyzing a one-codon backward translocation of tRNAs on improperly translocated ribosomes. Back-translocation proceeds from a post-translocation (POST) complex to a pre-translocation (PRE) complex, thus giving elongation factor G a second chance to translocate the tRNAs correctly. Binds to ribosomes in a GTP-dependent manner. This chain is Elongation factor 4, found in Paramagnetospirillum magneticum (strain ATCC 700264 / AMB-1) (Magnetospirillum magneticum).